A 107-amino-acid polypeptide reads, in one-letter code: UPF0060 membrane protein RPD_3084 (107 aa).

4 helical membrane-spanning segments follow: residues 5-25 (IIYVCAALAEIAGCFAFWGWL), 31-51 (VWWLLPGMLSLAAFAYLLTLV), 59-79 (AYASYGGIYIVASLVWLWSVE), and 85-105 (RWDVTGGCVCLIGAAIILWGP).

The protein belongs to the UPF0060 family.

It is found in the cell inner membrane. This is UPF0060 membrane protein RPD_3084 from Rhodopseudomonas palustris (strain BisB5).